We begin with the raw amino-acid sequence, 428 residues long: Bifunctional protein GlmU (428 aa).

The pyrophosphorylase stretch occupies residues 1–221 (MDIVILAAGC…ERKAMGINTR (221 aa)). Residues 6 to 9 (LAAG), K20, Q74, 79 to 80 (GT), 103 to 105 (YGD), G140, and N219 each bind UDP-N-acetyl-alpha-D-glucosamine. D105 serves as a coordination point for Mg(2+). Mg(2+) is bound at residue N219. Residues 222 to 242 (ADLAIAESYFQCMKRASFLQS) form a linker region. Positions 243 to 428 (GVTLTSPDQV…TTKPEYKTRR (186 aa)) are N-acetyltransferase. Residues R308 and K326 each contribute to the UDP-N-acetyl-alpha-D-glucosamine site. H338 (proton acceptor) is an active-site residue. 2 residues coordinate UDP-N-acetyl-alpha-D-glucosamine: Y341 and N352. Acetyl-CoA contacts are provided by residues A355, 361–362 (NY), A398, and R415.

In the N-terminal section; belongs to the N-acetylglucosamine-1-phosphate uridyltransferase family. It in the C-terminal section; belongs to the transferase hexapeptide repeat family. In terms of assembly, homotrimer. Mg(2+) serves as cofactor.

It is found in the cytoplasm. It catalyses the reaction alpha-D-glucosamine 1-phosphate + acetyl-CoA = N-acetyl-alpha-D-glucosamine 1-phosphate + CoA + H(+). The enzyme catalyses N-acetyl-alpha-D-glucosamine 1-phosphate + UTP + H(+) = UDP-N-acetyl-alpha-D-glucosamine + diphosphate. The protein operates within nucleotide-sugar biosynthesis; UDP-N-acetyl-alpha-D-glucosamine biosynthesis; N-acetyl-alpha-D-glucosamine 1-phosphate from alpha-D-glucosamine 6-phosphate (route II): step 2/2. Its pathway is nucleotide-sugar biosynthesis; UDP-N-acetyl-alpha-D-glucosamine biosynthesis; UDP-N-acetyl-alpha-D-glucosamine from N-acetyl-alpha-D-glucosamine 1-phosphate: step 1/1. It participates in bacterial outer membrane biogenesis; LPS lipid A biosynthesis. Its function is as follows. Catalyzes the last two sequential reactions in the de novo biosynthetic pathway for UDP-N-acetylglucosamine (UDP-GlcNAc). The C-terminal domain catalyzes the transfer of acetyl group from acetyl coenzyme A to glucosamine-1-phosphate (GlcN-1-P) to produce N-acetylglucosamine-1-phosphate (GlcNAc-1-P), which is converted into UDP-GlcNAc by the transfer of uridine 5-monophosphate (from uridine 5-triphosphate), a reaction catalyzed by the N-terminal domain. This chain is Bifunctional protein GlmU, found in Anaplasma marginale (strain Florida).